The chain runs to 152 residues: UPF0178 protein SAB0630c (152 aa).

It belongs to the UPF0178 family.

This chain is UPF0178 protein SAB0630c, found in Staphylococcus aureus (strain bovine RF122 / ET3-1).